Here is a 349-residue protein sequence, read N- to C-terminus: PDZ and LIM domain protein 2 (349 aa).

The 84-residue stretch at 1–84 (MALTVNVVGP…PLRLQLDRSQ (84 aa)) folds into the PDZ domain. Disordered regions lie at residues 72-95 (SASPLRLQLDRSQTASPGQINGEG) and 108-147 (LRTHHNSQSSQRSACFSPASLSPRPDSPFSTPPPTSPIAL). 2 stretches are compositionally biased toward polar residues: residues 81 to 90 (DRSQTASPGQ) and 108 to 121 (LRTHHNSQSSQRSA). Serine 124, serine 127, serine 129, serine 134, and serine 137 each carry phosphoserine. Residues threonine 138 and threonine 142 each carry the phosphothreonine modification. Serine 143 and serine 163 each carry phosphoserine. Disordered regions lie at residues 168–212 (ATHH…SSLD) and 250–272 (ERGGTPAFVPSSLSPKASLPTSR). Polar residues predominate over residues 176 to 192 (GQPTSQQAGHSSPSDST). Serine 199, serine 204, serine 205, serine 209, serine 210, and serine 263 each carry phosphoserine. Positions 199–211 (SPGRPSSPRLSSL) are enriched in low complexity. A compositionally biased stretch (polar residues) spans 260 to 270 (SSLSPKASLPT). Residues 281–341 (HTCEKCSVNI…EKHARQRYSM (61 aa)) form the LIM zinc-binding domain.

In terms of assembly, interacts with alpha-actinins ACTN1 and ACTN4, FLNA and MYH9. Interacts (via LIM zinc-binding domain) with MKRN2. As to expression, highly expressed in cornea and lung. Expressed at intermediate level in sclera and combined tissues of the eye irido-corneal angle. Specifically expressed in the corneal epithelial cells but not in other corneal layers.

The protein resides in the cytoplasm. Its subcellular location is the cytoskeleton. Probable adapter protein located at the actin cytoskeleton that promotes cell attachment. Necessary for the migratory capacity of epithelial cells. Overexpression enhances cell adhesion to collagen and fibronectin and suppresses anchorage independent growth. May contribute to tumor cell migratory capacity. This Rattus norvegicus (Rat) protein is PDZ and LIM domain protein 2 (Pdlim2).